The following is a 786-amino-acid chain: Protein translocase subunit SecA 1 (786 aa).

ATP-binding positions include Gln-85, 103–107 (GEGKT), and Asp-491.

Belongs to the SecA family. In terms of assembly, monomer and homodimer. Part of the essential Sec protein translocation apparatus which comprises SecA, SecYEG and auxiliary proteins SecDF. Other proteins may also be involved.

The protein localises to the cell membrane. It localises to the cytoplasm. The enzyme catalyses ATP + H2O + cellular proteinSide 1 = ADP + phosphate + cellular proteinSide 2.. Its function is as follows. Part of the Sec protein translocase complex. Interacts with the SecYEG preprotein conducting channel. Has a central role in coupling the hydrolysis of ATP to the transfer of proteins into and across the cell membrane, serving as an ATP-driven molecular motor driving the stepwise translocation of polypeptide chains across the membrane. This is Protein translocase subunit SecA 1 from Pediococcus pentosaceus (strain ATCC 25745 / CCUG 21536 / LMG 10740 / 183-1w).